The primary structure comprises 1767 residues: E3 ubiquitin-protein ligase listerin (1767 aa).

HEAT repeat units follow at residues 59–96 (SLVD…ERDT), 100–138 (KGVL…KVKK), 273–314 (SAYF…VVCP), 335–372 (NAKK…KLPQ), 380–418 (DFFK…CLRF), 433–473 (LINE…KADA), and 509–547 (VKSV…NIPE). Residues 550–583 (KGDEKSMSSEGENSEGSDGGAQSPLSNTSSDLVS) are disordered. Residues 572-581 (SPLSNTSSDL) are compositionally biased toward polar residues. HEAT repeat units lie at residues 621-658 (LDSF…KNPA), 676-714 (EDGG…KWSS), 1067-1104 (SETS…SSDE), 1183-1226 (QLLH…IMRF), 1315-1353 (GIHS…TLTY), 1378-1415 (EHLQ…ELPQ), and 1476-1513 (LGYL…LNKL). The RING-type zinc finger occupies 1716–1763 (CMICFSVIHGFNYSLPKKACRTCKKKFHSACLYKWFTSSNKSTCPLCR).

This sequence belongs to the LTN1 family. As to quaternary structure, component of the ribosome quality control complex (RQC), composed of at least the E3 ubiquitin ligase LTN1 and NEMF associated with the 60S ribosomal subunit. The complex probably also contains TCF25 as well as VCP/p97 and its ubiquitin-binding cofactors. In terms of processing, autoubiquitinated. In terms of tissue distribution, widely expressed, including in the brain and spinal cord.

Its subcellular location is the cytoplasm. It localises to the cytosol. It carries out the reaction S-ubiquitinyl-[E2 ubiquitin-conjugating enzyme]-L-cysteine + [acceptor protein]-L-lysine = [E2 ubiquitin-conjugating enzyme]-L-cysteine + N(6)-ubiquitinyl-[acceptor protein]-L-lysine.. The protein operates within protein modification; protein ubiquitination. Its function is as follows. E3 ubiquitin-protein ligase. component of the ribosome quality control complex (RQC), a ribosome-associated complex that mediates ubiquitination and extraction of incompletely synthesized nascent chains for proteasomal degradation. Within the RQC complex, LTN1 is recruited to stalled 60S ribosomal subunits by NEMF and mediates ubiquitination of stalled nascent chains. Ubiquitination leads to VCP/p97 recruitment for extraction and degradation of the incomplete translation product. This chain is E3 ubiquitin-protein ligase listerin (Ltn1), found in Mus musculus (Mouse).